The following is a 120-amino-acid chain: Large ribosomal subunit protein bL19 (120 aa).

It belongs to the bacterial ribosomal protein bL19 family.

Its function is as follows. This protein is located at the 30S-50S ribosomal subunit interface and may play a role in the structure and function of the aminoacyl-tRNA binding site. The chain is Large ribosomal subunit protein bL19 (rplS) from Nostoc sp. (strain PCC 7120 / SAG 25.82 / UTEX 2576).